The primary structure comprises 359 residues: CCAAT/enhancer-binding protein alpha (359 aa).

Positions 1–55 (MESADFYEVEPRPPMSSHLQSPPHAPSNAAFGFPRGAGPAPPPAPPAAPEPLGGI) are disordered. Positions 1–70 (MESADFYEVE…SIDISAYIDP (70 aa)) are required to repress E2F1:TFDP1-mediated transcription, to inhibit cell cycle and to induce adipocyte differentiation. The span at 29 to 38 (AAFGFPRGAG) shows a compositional bias: low complexity. The segment covering 39–49 (PAPPPAPPAAP) has biased composition (pro residues). The segment at 54-72 (GICEHETSIDISAYIDPAA) is required for interaction with TRIB1. The interval 126 to 200 (PPGYGCAAAG…HASPAHLAAP (75 aa)) is required to induce adipocyte differentiation. K159 is modified (N6-acetyllysine; alternate). K159 participates in a covalent cross-link: Glycyl lysine isopeptide (Lys-Gly) (interchain with G-Cter in SUMO); alternate. K159 is covalently cross-linked (Glycyl lysine isopeptide (Lys-Gly) (interchain with G-Cter in SUMO2); alternate). Disordered stretches follow at residues 176–195 (LFPYQPPPPPPPPHPHASPA) and 213–293 (TMHL…RERN). Pro residues predominate over residues 179-191 (YQPPPPPPPPHPH). Residues 180 to 194 (QPPPPPPPPHPHASP) form a required to functionally cooperate with SREBF1 in promoter activation region. Residue S193 is modified to Phosphoserine. A compositionally biased stretch (pro residues) spans 220 to 232 (HPTPPPTPVPSPH). Phosphothreonine; by GSK3 occurs at positions 222 and 226. S230 carries the post-translational modification Phosphoserine; by GSK3. Residues 233 to 255 (AAPALGAAGLPGPGSALKGLAGA) are compositionally biased toward low complexity. Positions 240-359 (AGLPGPGSAL…SLVKAMGNCA (120 aa)) are interaction with FOXO1. Gly residues predominate over residues 261–272 (TGGGGGGSGAGA). The segment covering 277–293 (KSVDKNSNEYRVRRERN) has biased composition (basic and acidic residues). Residues 283–346 (SNEYRVRRER…DTLRGIFRQL (64 aa)) form the bZIP domain. Residues 286–301 (YRVRRERNNIAVRKSR) mediate DNA binding. Residues 287–314 (RVRRERNNIAVRKSRDKAKQRNVETQQK) are basic motif. The segment at 318–346 (LTSDNDRLRKRVEQLSRELDTLRGIFRQL) is leucine-zipper.

The protein belongs to the bZIP family. C/EBP subfamily. As to quaternary structure, binds DNA as a homodimer and as a heterodimer. Can form stable heterodimers with CEBPB, CEBPD, CEBPE and CEBPG. Interacts with PRDM16. Interacts with UBN1. Interacts with ZNF638; this interaction increases transcriptional activation. Interacts with the complex TFDP2:E2F1; the interaction prevents CEBPA binding to target gene promoters and represses its transcriptional activity. Interacts with RB1. Interacts (when phosphorylated at Ser-193) with CDK2, CDK4, E2F4 and SMARCA2. Interacts with SREBPF1. Interacts with FOXO1 (via the Fork-head domain); the interaction increases when FOXO1 is deacetylated. Interacts with SIX1. Interacts (via recognition sequence) with TRIB1. Interacts (via bZIP domain) with OVOL2 (via zinc-finger domains); the interaction inhibits the transcription factor activity of CEBPA and is required to repress adipogenesis. Interacts with TAF1A and UBTF. In terms of assembly, interacts with TAF1A and UBTF. Interacts with NPM1. In terms of processing, sumoylated, sumoylation blocks the inhibitory effect on cell proliferation by disrupting the interaction with SMARCA2. Phosphorylation at Ser-193 is required for interaction with CDK2, CDK4 and SWI/SNF complex leading to cell cycle inhibition. Dephosphorylated at Ser-193 by protein phosphatase 2A (PP2A) through PI3K/AKT signaling pathway regulation. Phosphorylation at Thr-222 and Thr-226 by GSK3 is constitutive in adipose tissue and lung. In liver, both Thr-222 and Thr-226 are phosphorylated only during feeding but not during fasting. Phosphorylation of the GSK3 consensus sites selectively decreases transactivation activity on IRE-controlled promoters. Post-translationally, ubiquitinated by COP1 upon interaction with TRIB1. In terms of tissue distribution, isoform 2 and isoform 3 are expressed in adipose tissue and liver (at protein level).

It is found in the nucleus. Its subcellular location is the nucleolus. Its function is as follows. Transcription factor that coordinates proliferation arrest and the differentiation of myeloid progenitors, adipocytes, hepatocytes, and cells of the lung and the placenta. Binds directly to the consensus DNA sequence 5'-T[TG]NNGNAA[TG]-3' acting as an activator on distinct target genes. During early embryogenesis, plays essential and redundant functions with CEBPB. Essential for the transition from common myeloid progenitors (CMP) to granulocyte/monocyte progenitors (GMP). Critical for the proper development of the liver and the lung. Necessary for terminal adipocyte differentiation, is required for postnatal maintenance of systemic energy homeostasis and lipid storage. To regulate these different processes at the proper moment and tissue, interplays with other transcription factors and modulators. Down-regulates the expression of genes that maintain cells in an undifferentiated and proliferative state through E2F1 repression, which is critical for its ability to induce adipocyte and granulocyte terminal differentiation. Reciprocally E2F1 blocks adipocyte differentiation by binding to specific promoters and repressing CEBPA binding to its target gene promoters. Proliferation arrest also depends on a functional binding to SWI/SNF complex. In liver, regulates gluconeogenesis and lipogenesis through different mechanisms. To regulate gluconeogenesis, functionally cooperates with FOXO1 binding to IRE-controlled promoters and regulating the expression of target genes such as PCK1 or G6PC1. To modulate lipogenesis, interacts and transcriptionally synergizes with SREBF1 in promoter activation of specific lipogenic target genes such as ACAS2. In adipose tissue, seems to act as FOXO1 coactivator accessing to ADIPOQ promoter through FOXO1 binding sites. In terms of biological role, can act as dominant-negative. Binds DNA and have transctivation activity, even if much less efficiently than isoform 2. Does not inhibit cell proliferation. Directly and specifically enhances ribosomal DNA transcription interacting with RNA polymerase I-specific cofactors and inducing histone acetylation. The chain is CCAAT/enhancer-binding protein alpha from Mus musculus (Mouse).